The primary structure comprises 142 residues: Hemoglobin larval subunit alpha (142 aa).

Residues 2 to 142 (VLSAEEKALV…VSAVLTSKYR (141 aa)) form the Globin domain. His-59 contributes to the O2 binding site. Residue His-88 coordinates heme b.

Belongs to the globin family. In terms of assembly, heterotetramer of two alpha chains and two beta chains. In terms of tissue distribution, red blood cells.

Its function is as follows. Involved in oxygen transport from the lung to the various peripheral tissues. The chain is Hemoglobin larval subunit alpha from Pleurodeles waltl (Iberian ribbed newt).